A 152-amino-acid chain; its full sequence is UPF0260 protein BR1477/BS1330_I1471 (152 aa).

It belongs to the UPF0260 family.

The protein is UPF0260 protein BR1477/BS1330_I1471 of Brucella suis biovar 1 (strain 1330).